Here is a 76-residue protein sequence, read N- to C-terminus: Acyl carrier protein (76 aa).

The Carrier domain maps to 1–76; the sequence is MALLDDVKAV…DAIKYIENNA (76 aa). O-(pantetheine 4'-phosphoryl)serine is present on Ser-36.

The protein belongs to the acyl carrier protein (ACP) family. In terms of processing, 4'-phosphopantetheine is transferred from CoA to a specific serine of apo-ACP by AcpS. This modification is essential for activity because fatty acids are bound in thioester linkage to the sulfhydryl of the prosthetic group.

It localises to the cytoplasm. Its pathway is lipid metabolism; fatty acid biosynthesis. Its function is as follows. Carrier of the growing fatty acid chain in fatty acid biosynthesis. The protein is Acyl carrier protein of Aliarcobacter butzleri (strain RM4018) (Arcobacter butzleri).